An 893-amino-acid chain; its full sequence is Alpha-actinin-1 (893 aa).

The interval 1 to 248 is actin-binding; that stretch reads MDHHYDPQQT…IMTYVSSFYH (248 aa). Tyr-13 bears the Phosphotyrosine; by FAK1 mark. Calponin-homology (CH) domains are found at residues 32 to 136 and 145 to 251; these read KQQR…LRFA and TSAK…HAFS. Spectrin repeat units lie at residues 275–385, 395–500, 510–621, and 631–734; these read QLME…WLLN, HLAE…ALER, QLYL…ALME, and RLRK…EVEN. EF-hand domains are found at residues 747–782 and 788–823; these read EQMN…LGYD and QGEA…ETAD. Residues Asp-760, Asp-762, Ser-764, Thr-766, and Glu-771 each coordinate Ca(2+).

It belongs to the alpha-actinin family. In terms of assembly, homodimer; antiparallel. Interacts with PDLIM4 (via PDZ domain).

It localises to the cytoplasm. The protein resides in the cytoskeleton. Its subcellular location is the myofibril. It is found in the sarcomere. The protein localises to the z line. It localises to the cell membrane. The protein resides in the cell junction. Its subcellular location is the cell projection. It is found in the ruffle. F-actin cross-linking protein is thought to anchor actin to a variety of intracellular structures. This is a bundling protein. This is Alpha-actinin-1 (ACTN1) from Gallus gallus (Chicken).